A 654-amino-acid chain; its full sequence is Broad substrate specificity ATP-binding cassette transporter ABCG2 (654 aa).

The Cytoplasmic portion of the chain corresponds to 1 to 394; sequence MSSSNVEVFI…KNLLGNPQAS (394 aa). The 250-residue stretch at 37-286 folds into the ABC transporter domain; sequence LSFHNICYRV…FESAGYHCEA (250 aa). ATP-binding positions include 80 to 87, 184 to 190, Glu-211, and His-243; these read GPTGGGKS and RGVSGGE. One can recognise an ABC transmembrane type-2 domain in the interval 388–650; it reads LGNPQASIAQ…TIAYLKLLFL (263 aa). A helical transmembrane segment spans residues 395–415; sequence IAQIIVTVILGLVIGAIYFGL. The Extracellular segment spans residues 416-427; that stretch reads NNDSTGIQNRAG. The N-linked (GlcNAc...) asparagine glycan is linked to Asn-417. The helical transmembrane segment at 428-448 threads the bilayer; it reads VLFFLTTNQCFSSVSAVELFV. Residues 449–476 are Cytoplasmic-facing; the sequence is VEKKLFIHEYISGYYRVSSYFFGKLLSD. The helical transmembrane segment at 477-497 threads the bilayer; sequence LLPMRMLPSIIFTCIVYFMLG. At 498-505 the chain is on the extracellular side; it reads LKPTADAF. The helical transmembrane segment at 506–526 threads the bilayer; the sequence is FIMMFTLMMVAYSASSMALAI. The Cytoplasmic portion of the chain corresponds to 527–534; that stretch reads AAGQSVVS. A helical membrane pass occupies residues 535-555; the sequence is VATLLMTICFVFMMIFSGLLV. N-linked (GlcNAc...) asparagine glycans are attached at residues Asn-556, Asn-595, and Asn-599. Residues 556 to 629 are Extracellular-facing; that stretch reads NLTTIASWLS…LSPWGLWKNH (74 aa). Cys-591 and Cys-607 are disulfide-bonded. Residues 630–650 form a helical membrane-spanning segment; that stretch reads VALACMIVIFLTIAYLKLLFL. Topologically, residues 651–654 are cytoplasmic; it reads KKYS.

The protein belongs to the ABC transporter superfamily. ABCG family. Eye pigment precursor importer (TC 3.A.1.204) subfamily. Homodimer; disulfide-linked. The minimal functional unit is a homodimer, but the major oligomeric form in plasma membrane is a homotetramer with possibility of higher order oligomerization up to homododecamers. In terms of processing, N-glycosylated. Glycosylation-deficient ABCG2 is normally expressed and functional. Phosphorylated. Phosphorylation may regulate the localization to the plasma membrane, the homooligomerization and therefore, the activity of the transporter.

Its subcellular location is the cell membrane. The protein localises to the apical cell membrane. It localises to the mitochondrion membrane. It carries out the reaction ATP + H2O + xenobioticSide 1 = ADP + phosphate + xenobioticSide 2.. The enzyme catalyses urate(in) + ATP + H2O = urate(out) + ADP + phosphate + H(+). The catalysed reaction is indoxyl sulfate(in) + ATP + H2O = indoxyl sulfate(out) + ADP + phosphate + H(+). It catalyses the reaction sphing-4-enine 1-phosphate(in) + ATP + H2O = sphing-4-enine 1-phosphate(out) + ADP + phosphate + H(+). It carries out the reaction estrone 3-sulfate(in) + ATP + H2O = estrone 3-sulfate(out) + ADP + phosphate + H(+). The enzyme catalyses dehydroepiandrosterone 3-sulfate(in) + ATP + H2O = dehydroepiandrosterone 3-sulfate(out) + ADP + phosphate + H(+). The catalysed reaction is 4-methylumbelliferone sulfate(in) + ATP + H2O = 4-methylumbelliferone sulfate(out) + ADP + phosphate + H(+). It catalyses the reaction 5,7-dimethyl-2-methylamino-4-(3-pyridylmethyl)-1,3-benzothiazol-6-yl beta-D-glucuronate(in) + ATP + H2O = 5,7-dimethyl-2-methylamino-4-(3-pyridylmethyl)-1,3-benzothiazol-6-yl beta-D-glucuronate(out) + ADP + phosphate + H(+). It carries out the reaction 4-methylumbelliferone beta-D-glucuronate(in) + ATP + H2O = 4-methylumbelliferone beta-D-glucuronate(out) + ADP + phosphate + H(+). The enzyme catalyses 5,7-dimethyl-2-methylamino-4-(3-pyridylmethyl)-1,3-benzothiazol-6-yl sulfate(in) + ATP + H2O = 5,7-dimethyl-2-methylamino-4-(3-pyridylmethyl)-1,3-benzothiazol-6-yl sulfate(out) + ADP + phosphate + H(+). The catalysed reaction is 17beta-estradiol 17-O-(beta-D-glucuronate)(in) + ATP + H2O = 17beta-estradiol 17-O-(beta-D-glucuronate)(out) + ADP + phosphate + H(+). It catalyses the reaction methotrexate(in) + ATP + H2O = methotrexate(out) + ADP + phosphate + H(+). It carries out the reaction riboflavin(in) + ATP + H2O = riboflavin(out) + ADP + phosphate + H(+). The enzyme catalyses pheophorbide a(in) + ATP + H2O = pheophorbide a(out) + ADP + phosphate + H(+). The catalysed reaction is itaconate(in) + ATP + H2O = itaconate(out) + ADP + phosphate + H(+). Broad substrate specificity ATP-dependent transporter of the ATP-binding cassette (ABC) family that actively extrudes a wide variety of physiological compounds, dietary toxins and xenobiotics from cells. Involved in porphyrin homeostasis, mediating the export of protoporphyrin IX (PPIX) from both mitochondria to cytosol and cytosol to extracellular space, it also functions in the cellular export of heme. Also mediates the efflux of sphingosine-1-P from cells. Acts as a urate exporter functioning in both renal and extrarenal urate excretion. In kidney, it also functions as a physiological exporter of the uremic toxin indoxyl sulfate. Also involved in the excretion of steroids like estrone 3-sulfate/E1S, 3beta-sulfooxy-androst-5-en-17-one/DHEAS, and other sulfate conjugates. Mediates the secretion of the riboflavin and biotin vitamins into milk. Extrudes pheophorbide a, a phototoxic porphyrin catabolite of chlorophyll, reducing its bioavailability. Plays an important role in the exclusion of xenobiotics from the brain. It confers to cells a resistance to multiple drugs and other xenobiotics including mitoxantrone, pheophorbide, camptothecin, methotrexate, azidothymidine, and the anthracyclines daunorubicin and doxorubicin, through the control of their efflux. In placenta, it limits the penetration of drugs from the maternal plasma into the fetus. May play a role in early stem cell self-renewal by blocking differentiation. In inflammatory macrophages, exports itaconate from the cytosol to the extracellular compartment and limits the activation of TFEB-dependent lysosome biogenesis involved in antibacterial innate immune response. This Macaca mulatta (Rhesus macaque) protein is Broad substrate specificity ATP-binding cassette transporter ABCG2 (ABCG2).